A 398-amino-acid chain; its full sequence is Tyrosine--tRNA ligase (398 aa).

The 'HIGH' region motif lies at 42 to 51 (PTAPDIHLGH). A 'KMSKS' region motif is present at residues 226–230 (KMSKS). Lys-229 is an ATP binding site. The region spanning 336 to 397 (LAIANLLKDA…GKRKFAKVTL (62 aa)) is the S4 RNA-binding domain.

This sequence belongs to the class-I aminoacyl-tRNA synthetase family. TyrS type 2 subfamily. Homodimer.

Its subcellular location is the cytoplasm. The enzyme catalyses tRNA(Tyr) + L-tyrosine + ATP = L-tyrosyl-tRNA(Tyr) + AMP + diphosphate + H(+). Catalyzes the attachment of tyrosine to tRNA(Tyr) in a two-step reaction: tyrosine is first activated by ATP to form Tyr-AMP and then transferred to the acceptor end of tRNA(Tyr). The polypeptide is Tyrosine--tRNA ligase (Shewanella oneidensis (strain ATCC 700550 / JCM 31522 / CIP 106686 / LMG 19005 / NCIMB 14063 / MR-1)).